The sequence spans 119 residues: Integration host factor subunit beta (119 aa).

Positions 91–119 (DLVGNDQGDDSSNGSSDPLQSVMDMHAMH) are disordered. The segment covering 94 to 107 (GNDQGDDSSNGSSD) has biased composition (low complexity).

This sequence belongs to the bacterial histone-like protein family. In terms of assembly, heterodimer of an alpha and a beta chain.

Functionally, this protein is one of the two subunits of integration host factor, a specific DNA-binding protein that functions in genetic recombination as well as in transcriptional and translational control. The sequence is that of Integration host factor subunit beta from Bordetella parapertussis (strain 12822 / ATCC BAA-587 / NCTC 13253).